A 479-amino-acid chain; its full sequence is Aldehyde dehydrogenase family 3 member B3 (479 aa).

Residues glutamate 223 and cysteine 257 contribute to the active site. A lipid anchor (S-geranylgeranyl cysteine) is attached at cysteine 476. Positions 477–479 (TLL) are cleaved as a propeptide — removed in mature form.

The protein belongs to the aldehyde dehydrogenase family. Post-translationally, geranylgeranylation is important for membrane localization and enzyme activity. Expressed in testis, kidney, small intestine, spleen, white adipose tissue, liver and lung.

It is found in the cell membrane. The enzyme catalyses an aldehyde + NAD(+) + H2O = a carboxylate + NADH + 2 H(+). It catalyses the reaction hexadecanoate + NADH + 2 H(+) = hexadecanal + NAD(+) + H2O. It carries out the reaction octanal + NAD(+) + H2O = octanoate + NADH + 2 H(+). Functionally, oxidizes medium and long chain aldehydes into non-toxic fatty acids. This chain is Aldehyde dehydrogenase family 3 member B3, found in Mus musculus (Mouse).